The sequence spans 403 residues: ATP phosphoribosyltransferase regulatory subunit (403 aa).

Belongs to the class-II aminoacyl-tRNA synthetase family. HisZ subfamily. As to quaternary structure, heteromultimer composed of HisG and HisZ subunits.

The protein localises to the cytoplasm. The protein operates within amino-acid biosynthesis; L-histidine biosynthesis; L-histidine from 5-phospho-alpha-D-ribose 1-diphosphate: step 1/9. Functionally, required for the first step of histidine biosynthesis. May allow the feedback regulation of ATP phosphoribosyltransferase activity by histidine. The chain is ATP phosphoribosyltransferase regulatory subunit from Nostoc punctiforme (strain ATCC 29133 / PCC 73102).